Here is a 94-residue protein sequence, read N- to C-terminus: Putative membrane protein insertion efficiency factor (94 aa).

It belongs to the UPF0161 family.

It is found in the cell inner membrane. In terms of biological role, could be involved in insertion of integral membrane proteins into the membrane. The chain is Putative membrane protein insertion efficiency factor from Albidiferax ferrireducens (strain ATCC BAA-621 / DSM 15236 / T118) (Rhodoferax ferrireducens).